The chain runs to 302 residues: UTP--glucose-1-phosphate uridylyltransferase (302 aa).

Belongs to the UDPGP type 2 family. Homotetramer or homopentamer. Mg(2+) serves as cofactor.

The catalysed reaction is alpha-D-glucose 1-phosphate + UTP + H(+) = UDP-alpha-D-glucose + diphosphate. In terms of biological role, may play a role in stationary phase survival. This chain is UTP--glucose-1-phosphate uridylyltransferase (galU), found in Escherichia coli O157:H7.